The chain runs to 332 residues: MSRILDNEIMGDEELVERTLRPQYLREYIGQDKVKDQLQIFIEAAKMRDEALDHVLLFGPPGLGKTTMAFVIANELGVNLKQTSGPVIEKAGDLVAILNELEPGDVLFIDEIHRLPMSVEEVLYSAMEDFYIDIMIGAGEGSRSVHLELPPFTLIGATTRAGMLSNPLRARFGITGHMEYYAHAGLTEIVERTADIFEMEITHEAASELALRSRGTPRIANRLLKRVRDFAQIMGNGVIDDIITDKALTMLDVDHEGLDYVDQKILRTMIEMYSGGPVGLGTLSVNIAEERETVEDMYEPYLIQKGFIMRTRSGRVATAKAYEHLGYEYSEK.

Residues 1 to 181 (MSRILDNEIM…FGITGHMEYY (181 aa)) are large ATPase domain (RuvB-L). Residues Leu-20, Arg-21, Gly-62, Lys-65, Thr-66, Thr-67, 128–130 (EDF), Arg-171, Tyr-181, and Arg-218 each bind ATP. Thr-66 is a binding site for Mg(2+). The small ATPAse domain (RuvB-S) stretch occupies residues 182–252 (AHAGLTEIVE…ITDKALTMLD (71 aa)). Positions 255-332 (HEGLDYVDQK…EHLGYEYSEK (78 aa)) are head domain (RuvB-H). DNA is bound by residues Arg-291, Arg-310, Arg-312, and Arg-315.

This sequence belongs to the RuvB family. Homohexamer. Forms an RuvA(8)-RuvB(12)-Holliday junction (HJ) complex. HJ DNA is sandwiched between 2 RuvA tetramers; dsDNA enters through RuvA and exits via RuvB. An RuvB hexamer assembles on each DNA strand where it exits the tetramer. Each RuvB hexamer is contacted by two RuvA subunits (via domain III) on 2 adjacent RuvB subunits; this complex drives branch migration. In the full resolvosome a probable DNA-RuvA(4)-RuvB(12)-RuvC(2) complex forms which resolves the HJ.

The protein resides in the cytoplasm. The catalysed reaction is ATP + H2O = ADP + phosphate + H(+). Functionally, the RuvA-RuvB-RuvC complex processes Holliday junction (HJ) DNA during genetic recombination and DNA repair, while the RuvA-RuvB complex plays an important role in the rescue of blocked DNA replication forks via replication fork reversal (RFR). RuvA specifically binds to HJ cruciform DNA, conferring on it an open structure. The RuvB hexamer acts as an ATP-dependent pump, pulling dsDNA into and through the RuvAB complex. RuvB forms 2 homohexamers on either side of HJ DNA bound by 1 or 2 RuvA tetramers; 4 subunits per hexamer contact DNA at a time. Coordinated motions by a converter formed by DNA-disengaged RuvB subunits stimulates ATP hydrolysis and nucleotide exchange. Immobilization of the converter enables RuvB to convert the ATP-contained energy into a lever motion, pulling 2 nucleotides of DNA out of the RuvA tetramer per ATP hydrolyzed, thus driving DNA branch migration. The RuvB motors rotate together with the DNA substrate, which together with the progressing nucleotide cycle form the mechanistic basis for DNA recombination by continuous HJ branch migration. Branch migration allows RuvC to scan DNA until it finds its consensus sequence, where it cleaves and resolves cruciform DNA. This Streptococcus pneumoniae (strain JJA) protein is Holliday junction branch migration complex subunit RuvB.